A 394-amino-acid polypeptide reads, in one-letter code: MNENIVIVDAGRSAIGTFSGSLSSLSATEIGTAVLKGLLARTGLAPEQIDEVILGQVLTAGVGQNPARQTTLKAGLPHSVPAMTINKVCGSGLKAVHLAMQAIACGDADIVIAGGQESMSQSSHVLPRSRDGQRMGDWSMKDTMIVDGLWDAFNNYHMGTTAENIAQKYGFTREQQDAFAAASQQKTEAAQKAGRFQDEIIPIEIPQRKGDPKVFDADEFPRHGTTAESLGKLRPAFSRDGSVTAGNASGINDGAAMVVVMKESKAKELGLKPMARLVAFASAGVDPAIMGTGPIPASTKCLEKAGWTPADLDLIEANEAFAAQAMSVNQDMGWDLSKVNVNGGAIAIGHPIGASGARVLVTLLYEMQKRDAKKGLATLCIGGGQGVALAVERM.

The active-site Acyl-thioester intermediate is Cys89. Active-site proton acceptor residues include His350 and Cys380.

The protein belongs to the thiolase-like superfamily. Thiolase family. As to quaternary structure, homotetramer.

The protein resides in the cytoplasm. The enzyme catalyses 2 acetyl-CoA = acetoacetyl-CoA + CoA. It functions in the pathway biopolymer metabolism; poly-(R)-3-hydroxybutanoate biosynthesis. It participates in metabolic intermediate biosynthesis; (R)-mevalonate biosynthesis; (R)-mevalonate from acetyl-CoA: step 1/3. The polypeptide is Acetyl-CoA acetyltransferase (Allochromatium vinosum (strain ATCC 17899 / DSM 180 / NBRC 103801 / NCIMB 10441 / D) (Chromatium vinosum)).